Consider the following 82-residue polypeptide: ATP synthase subunit c, chloroplastic (82 aa).

2 helical membrane-spanning segments follow: residues 4 to 24 (IISA…AIGP) and 57 to 77 (LAFM…LLFA).

This sequence belongs to the ATPase C chain family. As to quaternary structure, F-type ATPases have 2 components, F(1) - the catalytic core - and F(0) - the membrane proton channel. F(1) has five subunits: alpha(3), beta(3), gamma(1), delta(1), epsilon(1). F(0) has four main subunits: a(1), b(1), b'(1) and c(10-14). The alpha and beta chains form an alternating ring which encloses part of the gamma chain. F(1) is attached to F(0) by a central stalk formed by the gamma and epsilon chains, while a peripheral stalk is formed by the delta, b and b' chains.

Its subcellular location is the plastid. The protein localises to the chloroplast thylakoid membrane. F(1)F(0) ATP synthase produces ATP from ADP in the presence of a proton or sodium gradient. F-type ATPases consist of two structural domains, F(1) containing the extramembraneous catalytic core and F(0) containing the membrane proton channel, linked together by a central stalk and a peripheral stalk. During catalysis, ATP synthesis in the catalytic domain of F(1) is coupled via a rotary mechanism of the central stalk subunits to proton translocation. In terms of biological role, key component of the F(0) channel; it plays a direct role in translocation across the membrane. A homomeric c-ring of between 10-14 subunits forms the central stalk rotor element with the F(1) delta and epsilon subunits. The polypeptide is ATP synthase subunit c, chloroplastic (Trieres chinensis (Marine centric diatom)).